Consider the following 33-residue polypeptide: uncharacterized protein (33 aa).

Residues 1–12 lie on the Cytoplasmic side of the membrane; the sequence is MKENKVQQISHK. Residues 13 to 33 form a helical membrane-spanning segment; sequence LINIVVFVAIVEYAYLFLHFY.

Its subcellular location is the cell inner membrane. This is an uncharacterized protein from Escherichia coli (strain K12).